The following is a 322-amino-acid chain: Phosphatidylserine decarboxylase proenzyme (322 aa).

Residues Asp-90, His-147, and Ser-254 each act as charge relay system; for autoendoproteolytic cleavage activity in the active site. Ser-254 acts as the Schiff-base intermediate with substrate; via pyruvic acid; for decarboxylase activity in catalysis. Ser-254 is modified (pyruvic acid (Ser); by autocatalysis). Positions Glu-294 to Thr-322 are disordered. Residues Asp-303–Thr-322 are compositionally biased toward basic and acidic residues.

This sequence belongs to the phosphatidylserine decarboxylase family. PSD-B subfamily. Prokaryotic type I sub-subfamily. As to quaternary structure, heterodimer of a large membrane-associated beta subunit and a small pyruvoyl-containing alpha subunit. Pyruvate is required as a cofactor. In terms of processing, is synthesized initially as an inactive proenzyme. Formation of the active enzyme involves a self-maturation process in which the active site pyruvoyl group is generated from an internal serine residue via an autocatalytic post-translational modification. Two non-identical subunits are generated from the proenzyme in this reaction, and the pyruvate is formed at the N-terminus of the alpha chain, which is derived from the carboxyl end of the proenzyme. The autoendoproteolytic cleavage occurs by a canonical serine protease mechanism, in which the side chain hydroxyl group of the serine supplies its oxygen atom to form the C-terminus of the beta chain, while the remainder of the serine residue undergoes an oxidative deamination to produce ammonia and the pyruvoyl prosthetic group on the alpha chain. During this reaction, the Ser that is part of the protease active site of the proenzyme becomes the pyruvoyl prosthetic group, which constitutes an essential element of the active site of the mature decarboxylase.

The protein resides in the cell membrane. The catalysed reaction is a 1,2-diacyl-sn-glycero-3-phospho-L-serine + H(+) = a 1,2-diacyl-sn-glycero-3-phosphoethanolamine + CO2. The protein operates within phospholipid metabolism; phosphatidylethanolamine biosynthesis; phosphatidylethanolamine from CDP-diacylglycerol: step 2/2. Functionally, catalyzes the formation of phosphatidylethanolamine (PtdEtn) from phosphatidylserine (PtdSer). The chain is Phosphatidylserine decarboxylase proenzyme from Salmonella paratyphi C (strain RKS4594).